Here is a 298-residue protein sequence, read N- to C-terminus: Probable endonuclease 4 (298 aa).

Zn(2+)-binding residues include H69, H111, E146, D180, H183, H215, D228, H230, and E260.

The protein belongs to the AP endonuclease 2 family. Requires Zn(2+) as cofactor.

It carries out the reaction Endonucleolytic cleavage to 5'-phosphooligonucleotide end-products.. Endonuclease IV plays a role in DNA repair. It cleaves phosphodiester bonds at apurinic or apyrimidinic (AP) sites, generating a 3'-hydroxyl group and a 5'-terminal sugar phosphate. This Bacillus anthracis (strain A0248) protein is Probable endonuclease 4.